We begin with the raw amino-acid sequence, 92 residues long: MTRSLKKNPFVANHLLRKIEKLNKKAEKEIIVTWSRASTIIPTMIGHTIAIHNGREHLPIYITDRMVGHKLGEFAPTLNFRGHAKNDNKSRR.

This sequence belongs to the universal ribosomal protein uS19 family. In terms of assembly, component of the chloroplast small ribosomal subunit (SSU). Mature 70S chloroplast ribosomes of higher plants consist of a small (30S) and a large (50S) subunit. The 30S small subunit contains 1 molecule of ribosomal RNA (16S rRNA) and 24 different proteins. The 50S large subunit contains 3 rRNA molecules (23S, 5S and 4.5S rRNA) and 33 different proteins. uS19c binds directly to 16S ribosomal RNA.

Its subcellular location is the plastid. The protein localises to the chloroplast. Its function is as follows. Component of the chloroplast ribosome (chloro-ribosome), a dedicated translation machinery responsible for the synthesis of chloroplast genome-encoded proteins, including proteins of the transcription and translation machinery and components of the photosynthetic apparatus. In Spinacia oleracea (Spinach), this protein is Small ribosomal subunit protein uS19c (rps19).